The following is a 228-amino-acid chain: Upstream activation factor subunit UAF30 (228 aa).

In terms of domain architecture, DEK-C spans 1–56; sequence MAELNDYSTMIDILLSDMDLETVTTKKVRMALKEVYAIDVESQGKAINKLIRKHLD. Basic and acidic residues predominate over residues 89 to 111; the sequence is SKRSSGEEKNDSETKGTHVEKKK. Residues 89–118 are disordered; sequence SKRSSGEEKNDSETKGTHVEKKKGTVSKSP. The 77-residue stretch at 119 to 195 folds into the SWIB/MDM2 domain; it reads ISTRKVTLSK…HKILASHMTE (77 aa). The tract at residues 209–228 is disordered; the sequence is VRRKEKPIVSDSEQSDTKGI. Residues Ser218, Ser220, and Ser223 each carry the phosphoserine modification.

As to quaternary structure, component of the UAF (upstream activation factor) complex which consists of UAF30, RRN5, RRN9, RRN10, and histones H3 and H4.

It is found in the nucleus. It localises to the nucleolus. In terms of biological role, nonessential component of the UAF (upstream activation factor) complex which interacts with the upstream element of the RNA polymerase I promoter and forms a stable preinitiation complex. Together with SPT15/TBP UAF seems to stimulate basal transcription to a fully activated level. UAF30 seems to play a role in silencing transcription by RNA polymerase II. The chain is Upstream activation factor subunit UAF30 (UAF30) from Saccharomyces cerevisiae (strain ATCC 204508 / S288c) (Baker's yeast).